The chain runs to 730 residues: Protein groucho (730 aa).

The interval 144 to 411 (QVPGGPPQPM…GKPAYSFHMN (268 aa)) is disordered. The segment covering 198–233 (AEERLRNSVSPADREKYRTRSPLDIENDSKRRKDEK) has biased composition (basic and acidic residues). Residues Ser-205, Ser-207, and Ser-218 each carry the phosphoserine modification. The CCN domain stretch occupies residues 206-267 (VSPADREKYR…SPRPNGEHVS (62 aa)). The Nuclear localization signal signature appears at 227–230 (KRRK). The residue at position 242 (Ser-242) is a Phosphoserine; by CK2. The span at 254–283 (MESHSPRPNGEHVSMEVRDRESLNGERLEK) shows a compositional bias: basic and acidic residues. The residue at position 258 (Ser-258) is a Phosphoserine; by CDC2. The binding to basic helix-loop-helix domain stretch occupies residues 262-425 (NGEHVSMEVR…LQPVPFPPDA (164 aa)). Ser-267 carries the post-translational modification Phosphoserine. Low complexity-rich tracts occupy residues 296-308 (SRSG…STPS), 322-345 (AKAR…QMMP), and 353-362 (YPGAPYQRPA). Phosphothreonine is present on residues Thr-326 and Thr-328. Residues 366–382 (QRPPSDPAYGRPPPMPY) are compositionally biased toward pro residues. WD repeat units lie at residues 442–480 (SHGE…NKNP), 488–527 (QRDN…PRIK), 532–571 (SAAP…LVRQ), 574–613 (GHTD…QLQQ), 615–654 (DFSS…KYQL), 656–695 (LHES…SIFQ), and 697–730 (KETS…EVIY).

This sequence belongs to the WD repeat Groucho/TLE family. In terms of assembly, forms a complex with the hairy/Enhancer of split/deadpan family of basic helix-loop-helix proteins in order to repress transcription. Its activity in regulating transcription depends on other proteins as it lacks a DNA-binding motif. Interacts with hairy/hry (via WRPW motif). Post-translationally, ubiquitinated by XIAP/BIRC4. Ubiquitinated by hyd in response to Wnt signaling, leading to degradation by the proteasome.

It is found in the nucleus. In terms of biological role, transcriptional corepressor that regulates transcription when recruited to specific target DNA by hairy-related bHLH proteins. Maternally required for neurogenesis; in the segregation of the neuroectoderm. Directly or indirectly interacts with Notch and Delta. The chain is Protein groucho (gro) from Drosophila melanogaster (Fruit fly).